The primary structure comprises 829 residues: Periplasmic nitrate reductase (829 aa).

The segment at residues 1–29 (MKMTRRAFVKANAAASAAAVAGVTLPASA) is a signal peptide (tat-type signal). The region spanning 41–97 (IKWDKAPCRFCGTGCSVLVGTQNGRVVATQGDPEAPVNKGLNCIKGYFLSKIMYGKD) is the 4Fe-4S Mo/W bis-MGD-type domain. Residues C48, C51, C55, and C83 each coordinate [4Fe-4S] cluster. Residues K85, Q152, N177, C181, 214–221 (WGSNMAEM), 245–249 (STYYH), 264–266 (QSD), M374, Q378, N484, 510–511 (SD), K533, D560, and 718–727 (TGRVLEHWHT) each bind Mo-bis(molybdopterin guanine dinucleotide). F794 lines the substrate pocket. Residues N802 and K819 each contribute to the Mo-bis(molybdopterin guanine dinucleotide) site.

Belongs to the prokaryotic molybdopterin-containing oxidoreductase family. NasA/NapA/NarB subfamily. Component of the periplasmic nitrate reductase NapAB complex composed of NapA and NapB. It depends on [4Fe-4S] cluster as a cofactor. The cofactor is Mo-bis(molybdopterin guanine dinucleotide). Predicted to be exported by the Tat system. The position of the signal peptide cleavage has not been experimentally proven.

It localises to the periplasm. It carries out the reaction 2 Fe(II)-[cytochrome] + nitrate + 2 H(+) = 2 Fe(III)-[cytochrome] + nitrite + H2O. Its function is as follows. Catalytic subunit of the periplasmic nitrate reductase complex NapAB. Receives electrons from NapB and catalyzes the reduction of nitrate to nitrite. This Aliivibrio fischeri (strain ATCC 700601 / ES114) (Vibrio fischeri) protein is Periplasmic nitrate reductase.